The sequence spans 68 residues: Translational regulator CsrA 1 (68 aa).

Belongs to the CsrA/RsmA family. Homodimer; the beta-strands of each monomer intercalate to form a hydrophobic core, while the alpha-helices form wings that extend away from the core.

Its subcellular location is the cytoplasm. Its function is as follows. A key translational regulator that binds mRNA to regulate translation initiation and/or mRNA stability. Mediates global changes in gene expression, shifting from rapid growth to stress survival by linking envelope stress, the stringent response and the catabolite repression systems. Usually binds in the 5'-UTR; binding at or near the Shine-Dalgarno sequence prevents ribosome-binding, repressing translation, binding elsewhere in the 5'-UTR can activate translation and/or stabilize the mRNA. Its function is antagonized by small RNA(s). In Coxiella burnetii (strain RSA 493 / Nine Mile phase I), this protein is Translational regulator CsrA 1.